Reading from the N-terminus, the 334-residue chain is Transcription factor MYB92 (334 aa).

2 consecutive HTH myb-type domains span residues 9 to 61 (DSGL…TNYL) and 62 to 116 (RPDI…KKKL). 2 DNA-binding regions (H-T-H motif) span residues 37 to 61 (WRAL…TNYL) and 89 to 112 (WSTI…NTHL).

As to quaternary structure, interacts with FBX5. In terms of tissue distribution, highly expressed in roots and at lower levels in stems, flowers and siliques.

Its subcellular location is the nucleus. In terms of biological role, probable transcription factor. The protein is Transcription factor MYB92 of Arabidopsis thaliana (Mouse-ear cress).